The sequence spans 307 residues: Putative lipid kinase SE_0507 (307 aa).

Positions 3–139 (QPYNHGVLFY…YDVLKVNDLY (137 aa)) constitute a DAGKc domain. ATP contacts are provided by residues serine 44, 74-80 (GDGTLNE), and threonine 101. Mg(2+) is bound by residues serine 220, aspartate 223, and arginine 225. The Proton acceptor role is filled by glutamate 281.

This sequence belongs to the diacylglycerol/lipid kinase family. The cofactor is Mg(2+).

May catalyze the ATP-dependent phosphorylation of lipids other than diacylglycerol (DAG). The protein is Putative lipid kinase SE_0507 of Staphylococcus epidermidis (strain ATCC 12228 / FDA PCI 1200).